Here is a 287-residue protein sequence, read N- to C-terminus: Shikimate dehydrogenase (NADP(+)) (287 aa).

Residues 20 to 22 and T67 contribute to the shikimate site; that span reads SRS. K71 acts as the Proton acceptor in catalysis. E84 provides a ligand contact to NADP(+). Shikimate-binding residues include N93 and D108. NADP(+) contacts are provided by residues 132 to 136, 156 to 161, and M226; these read GAGGA and NRTAAR. Y228 serves as a coordination point for shikimate. G250 is a binding site for NADP(+).

This sequence belongs to the shikimate dehydrogenase family. In terms of assembly, homodimer.

The catalysed reaction is shikimate + NADP(+) = 3-dehydroshikimate + NADPH + H(+). It functions in the pathway metabolic intermediate biosynthesis; chorismate biosynthesis; chorismate from D-erythrose 4-phosphate and phosphoenolpyruvate: step 4/7. Its function is as follows. Involved in the biosynthesis of the chorismate, which leads to the biosynthesis of aromatic amino acids. Catalyzes the reversible NADPH linked reduction of 3-dehydroshikimate (DHSA) to yield shikimate (SA). The sequence is that of Shikimate dehydrogenase (NADP(+)) from Bordetella parapertussis (strain 12822 / ATCC BAA-587 / NCTC 13253).